Reading from the N-terminus, the 69-residue chain is Alpha-conotoxin SrIA/SrIB (69 aa).

The signal sequence occupies residues 1 to 21 (MGMRMMFTVFLLVVLATTVVS). Residues 22-48 (FTSDSAFDSRNVAANDKVSDMIALTAR) constitute a propeptide that is removed on maturation. 2 cysteine pairs are disulfide-bonded: Cys-51/Cys-57 and Cys-52/Cys-65. Residues 53–55 (SRP) form a ser-Xaa-Pro motif, crucial for potent interaction with nAChR region. 4-hydroxyproline; in form Sr1A and Sr1B is present on Pro-55. The residue at position 60 (Glu-60) is a 4-carboxyglutamate; in form Sr1A. Glu-63 carries the 4-carboxyglutamate; in form Sr1A and Sr1B modification. Gly-66 carries the glycine amide; in form Sr1A and Sr1B modification.

This sequence belongs to the conotoxin A superfamily. In terms of processing, occurs in 2 forms which differ in the post-translational modification of Glu-60. In form SrA1 Glu-60 is 4-carboxyglutamate while in form SrA2 Glu-60 is unmodified. Expressed by the venom duct.

The protein localises to the secreted. In terms of biological role, alpha-conotoxins act on postsynaptic membranes, they bind to the nicotinic acetylcholine receptors (nAChR) and thus inhibit them. Has weak blocking effects on muscle nAChR composed of alpha-1/beta-1/gamma/delta subunits and the central nervous system nAChR composed of alpha-4/beta-2 subunits. Does not detectably affect the peripheral nervous system nAChR composed of alpha-3/beta-4 subunits. Low toxin concentrations potentiate currents in muscle nAChR composed of alpha-1/beta-1/gamma/delta subunits and central nervous system nAChR composed of alpha-4/beta-2 subunits, but not the peripheral nervous system nAChR composed of alpha-3/beta-4 subunits. This chain is Alpha-conotoxin SrIA/SrIB, found in Conus spurius (Alphabet cone).